The following is a 274-amino-acid chain: Probable eukaryotic translation initiation factor 3 subunit J (274 aa).

Disordered regions lie at residues 1-110 (MDSW…KEAM) and 207-245 (KEQQ…NVNS). Residues 38–47 (DEEDEDEEEN) show a composition bias toward acidic residues. Over residues 52 to 73 (QNDSHSVSQKSSSSSQNDQGSN) the composition is skewed to low complexity. Over residues 82-110 (IQERNFEKAIKASEAAAKEESLESSKEAM) the composition is skewed to basic and acidic residues. The segment covering 219–234 (AAAPAAKPVSTAAPSK) has biased composition (low complexity).

This sequence belongs to the eIF-3 subunit J family. As to quaternary structure, component of the eukaryotic translation initiation factor 3 (eIF-3) complex. The eIF-3 complex appears to include tif32/eif3a, SPAC25G10.08/eif3b, tif33/eif3c, SPBC4C3.07/eif3f, tif35/eif3g and sum1/eif3i. This set of common subunits may also associate exclusively with either moe1/eif3d and int6/eif3e, or with SPAC821.05/eif3h and SPAC1751.03/eif3m. The eIF-3 complex may also include SPAC3A12.13c/eif3j. Interacts with sad1.

It is found in the cytoplasm. Functionally, component of the eukaryotic translation initiation factor 3 (eIF-3) complex, which is involved in protein synthesis of a specialized repertoire of mRNAs and, together with other initiation factors, stimulates binding of mRNA and methionyl-tRNAi to the 40S ribosome. The eIF-3 complex specifically targets and initiates translation of a subset of mRNAs involved in cell proliferation. This is Probable eukaryotic translation initiation factor 3 subunit J from Schizosaccharomyces pombe (strain 972 / ATCC 24843) (Fission yeast).